Here is a 690-residue protein sequence, read N- to C-terminus: Adhesion G protein-coupled receptor L4 (690 aa).

A signal peptide spans 1–19 (MKRLPLLVVFSTLLNCSYT). The 38-residue stretch at 20-57 (QNCTKTPCLPNAKCEIRNGIEACYCNMGFSGNGVTICE) folds into the EGF-like 1 domain. The Extracellular portion of the chain corresponds to 20 to 432 (QNCTKTPCLP…DYNILTRITQ (413 aa)). A glycan (N-linked (GlcNAc...) asparagine) is linked at Asn-21. Intrachain disulfides connect Cys-22-Cys-33, Cys-27-Cys-42, Cys-44-Cys-56, Cys-62-Cys-75, Cys-69-Cys-84, and Cys-86-Cys-107. Positions 58-108 (DDNECGNLTQSCGENANCTNTEGSYYCMCVPGFRSSSNQDRFITNDGTVCI) constitute an EGF-like 2; calcium-binding domain. Residues Asn-64 and Asn-74 are each glycosylated (N-linked (GlcNAc...) asparagine). Residues Asn-127, Asn-177, Asn-188, Asn-249, Asn-381, and Asn-395 are each glycosylated (N-linked (GlcNAc...) asparagine). The GAIN-B domain maps to 244–419 (TEFDTNSTDI…AILMSSGPSI (176 aa)). 2 cysteine pairs are disulfide-bonded: Cys-370–Cys-401 and Cys-389–Cys-403. The interval 370–419 (CAFWNYSPDTMNGSWSSEGCELTYSNETHTSCRCNHLTHFAILMSSGPSI) is GPS. Residues 433 to 453 (LGIIISLICLAICIFTFWFFS) traverse the membrane as a helical segment. The Cytoplasmic segment spans residues 454–460 (EIQSTRT). The chain crosses the membrane as a helical span at residues 461–481 (TIHKNLCCSLFLAELVFLVGI). Residues 482-499 (NTNTNKLFCSIIAGLLHY) are Extracellular-facing. The chain crosses the membrane as a helical span at residues 500-520 (FFLAAFAWMCIEGIHLYLIVV). At 521–532 (GVIYNKGFLHKN) the chain is on the cytoplasmic side. Residues 533–553 (FYIFGYLSPAVVVGFSAALGY) traverse the membrane as a helical segment. Topologically, residues 554–573 (RYYGTTKVCWLSTENNFIWS) are extracellular. Residues 574–594 (FIGPACLIILVNLLAFGVIIY) form a helical membrane-spanning segment. Topologically, residues 595 to 618 (KVFRHTAGLKPEVSCFENIRSCAR) are cytoplasmic. The chain crosses the membrane as a helical span at residues 619 to 639 (GALALLFLLGTTWIFGVLHVV). Residues 640-646 (HASVVTA) are Extracellular-facing. Residues 647–667 (YLFTVSNAFQGMFIFLFLCVL) traverse the membrane as a helical segment. Residues 668–690 (SRKIQEEYYRLFKNVPCCFGCLR) lie on the Cytoplasmic side of the membrane.

The protein belongs to the G-protein coupled receptor 2 family. Adhesion G-protein coupled receptor (ADGR) subfamily. Heterodimer of 2 chains generated by proteolytic processing; the large extracellular N-terminal fragment and the membrane-bound C-terminal fragment predominantly remain associated and non-covalently linked. In terms of processing, glycosylated. Proteolytically cleaved into 2 subunits, an extracellular alpha subunit and a seven-transmembrane subunit. In terms of tissue distribution, detected in the majority of epithelial cells in tumor and normal tissues. Expressed also in human umbilical vein endothelial cells.

The protein resides in the cell membrane. Functionally, endothelial orphan receptor that acts as a key regulator of angiogenesis. The sequence is that of Adhesion G protein-coupled receptor L4 from Homo sapiens (Human).